Here is a 370-residue protein sequence, read N- to C-terminus: MASRKLLLLPGDGIGPEAMAEVRKVIAFLNSDLNLGFETEEGLVGGCAYDAHGQAISDADMEKALAADAVLFGAVGGPKWDSVPYEVRPEGGLLRLRKDMQLYANLRPAICYPALAHSSSLKPEVIEGLDILILRELTGGVYFGEPKEIIDLGNGQKRGIDTQVYDTYEIERIADVAFELARTRRNKVTSMEKRNVMKSGVLWNQGVTARHKEKHADVQLEHMLADAGGMQLVRWPKQFDVILTDNLFGDLLSDVAAMLTGSLGMLPSASLGAADSKTGKRKALYEPVHGSAPDIAGKGIANPIAMIASLAMCLRYSFGLVAEADRLEAAIAGVLDDGIRTADIWSEGNTKVGTTEMGDAILAKFKALSA.

77 to 90 is an NAD(+) binding site; the sequence is GPKWDSVPYEVRPE. The substrate site is built by R97, R107, R135, and D226. Residues D226, D250, and D254 each contribute to the Mg(2+) site. 290-302 contributes to the NAD(+) binding site; it reads GSAPDIAGKGIAN.

The protein belongs to the isocitrate and isopropylmalate dehydrogenases family. LeuB type 1 subfamily. In terms of assembly, homodimer. The cofactor is Mg(2+). Mn(2+) is required as a cofactor.

It is found in the cytoplasm. It carries out the reaction (2R,3S)-3-isopropylmalate + NAD(+) = 4-methyl-2-oxopentanoate + CO2 + NADH. It participates in amino-acid biosynthesis; L-leucine biosynthesis; L-leucine from 3-methyl-2-oxobutanoate: step 3/4. Functionally, catalyzes the oxidation of 3-carboxy-2-hydroxy-4-methylpentanoate (3-isopropylmalate) to 3-carboxy-4-methyl-2-oxopentanoate. The product decarboxylates to 4-methyl-2 oxopentanoate. This chain is 3-isopropylmalate dehydrogenase, found in Brucella melitensis biotype 1 (strain ATCC 23456 / CCUG 17765 / NCTC 10094 / 16M).